Consider the following 95-residue polypeptide: MAFKFNAEVRTAQGKGASRRLRNNGQIPAIVYGGSEEPVSIILNHDELNNAQAHESFYSEVITLVIGGKEVAVKVQAMQRHPFKPKLVHIDFKRA.

Belongs to the bacterial ribosomal protein bL25 family. As to quaternary structure, part of the 50S ribosomal subunit; part of the 5S rRNA/L5/L18/L25 subcomplex. Contacts the 5S rRNA. Binds to the 5S rRNA independently of L5 and L18.

Functionally, this is one of the proteins that binds to the 5S RNA in the ribosome where it forms part of the central protuberance. This chain is Large ribosomal subunit protein bL25, found in Haemophilus influenzae (strain 86-028NP).